The primary structure comprises 448 residues: MSKKLISIVDVKDYVGQEVTIGAWVANKSGKGKIAFVQLRDGSAFFQGVAFKPNFIEKYGEESGLEKFDVIKRLNQETSVYVTGIVKEDERSKFGYELDITDLEVIGESHEYPITPKEHGTDFLMDNRHLWLRSRKQMAVMQIRNAIIYSTYEFFDQNGFIKFDSPILSENAAEDSTELFETDYFGKPAFLSQSGQLYLEAGAMALGRVFDFGPVFRAEKSKTRRHLTEFWMMDAEYSFLSHEESLDLQEAYVKALIQGVLDRAPQALDILERDVEALKRYIAEPFKRVSYDDAITLLQEHEADEDTDYEHLEHGDDFGSPHETWISNYFGVPTFVVNYPASFKAFYMKPVPGNPERVLCADLLAPEGYGEIIGGSMREDDYDALVAKMDELGMDKSEYDFYLDLRKYGSVPHGGFGIGIERMVTFVAGTKHIREAIPFPRMLHRIKP.

Belongs to the class-II aminoacyl-tRNA synthetase family. Homodimer.

It localises to the cytoplasm. It carries out the reaction tRNA(Asn) + L-asparagine + ATP = L-asparaginyl-tRNA(Asn) + AMP + diphosphate + H(+). The chain is Asparagine--tRNA ligase from Streptococcus agalactiae serotype Ia (strain ATCC 27591 / A909 / CDC SS700).